Reading from the N-terminus, the 1316-residue chain is DNA-directed RNA polymerase subunit beta' (1316 aa).

C60, C62, C75, and C78 together coordinate Zn(2+). The Mg(2+) site is built by D535, D537, and D539. Zn(2+) is bound by residues C891, C968, C975, and C978.

Belongs to the RNA polymerase beta' chain family. As to quaternary structure, the RNAP catalytic core consists of 2 alpha, 1 beta, 1 beta' and 1 omega subunit. When a sigma factor is associated with the core the holoenzyme is formed, which can initiate transcription. Mg(2+) serves as cofactor. It depends on Zn(2+) as a cofactor.

It catalyses the reaction RNA(n) + a ribonucleoside 5'-triphosphate = RNA(n+1) + diphosphate. Its function is as follows. DNA-dependent RNA polymerase catalyzes the transcription of DNA into RNA using the four ribonucleoside triphosphates as substrates. The protein is DNA-directed RNA polymerase subunit beta' of Mycobacterium leprae (strain Br4923).